We begin with the raw amino-acid sequence, 313 residues long: Ribose 1,5-bisphosphate isomerase (313 aa).

Substrate-binding positions include 17–20 (RGAA) and R57. C121 functions as the Proton acceptor in the catalytic mechanism. D190 acts as the Proton donor in catalysis. Substrate contacts are provided by residues 200–201 (NK) and K226.

Belongs to the eIF-2B alpha/beta/delta subunits family. R15P isomerase subfamily.

It carries out the reaction alpha-D-ribose 1,5-bisphosphate = D-ribulose 1,5-bisphosphate. In terms of biological role, catalyzes the isomerization of ribose 1,5-bisphosphate (R15P) to ribulose 1,5-bisphosphate (RuBP), the CO(2) acceptor and substrate for RubisCO. Functions in an archaeal AMP degradation pathway, together with AMP phosphorylase and RubisCO. This Archaeoglobus fulgidus (strain ATCC 49558 / DSM 4304 / JCM 9628 / NBRC 100126 / VC-16) protein is Ribose 1,5-bisphosphate isomerase.